A 694-amino-acid chain; its full sequence is Elongation factor G (694 aa).

Residues 8–287 form the tr-type G domain; the sequence is EDYRNFGIMA…AVVEFLPAPT (280 aa). GTP contacts are provided by residues 17–24, 86–90, and 140–143; these read AHIDAGKT, DTPGH, and NKMD.

The protein belongs to the TRAFAC class translation factor GTPase superfamily. Classic translation factor GTPase family. EF-G/EF-2 subfamily.

The protein localises to the cytoplasm. Its function is as follows. Catalyzes the GTP-dependent ribosomal translocation step during translation elongation. During this step, the ribosome changes from the pre-translocational (PRE) to the post-translocational (POST) state as the newly formed A-site-bound peptidyl-tRNA and P-site-bound deacylated tRNA move to the P and E sites, respectively. Catalyzes the coordinated movement of the two tRNA molecules, the mRNA and conformational changes in the ribosome. This chain is Elongation factor G, found in Brucella melitensis biotype 2 (strain ATCC 23457).